We begin with the raw amino-acid sequence, 765 residues long: 5-methyltetrahydropteroyltriglutamate--homocysteine methyltransferase (765 aa).

Residues Lys-18 and Asn-116 each contribute to the 5-methyltetrahydropteroyltri-L-glutamate site. L-homocysteine-binding positions include 437 to 439 (IGS) and Glu-490. Residues 437–439 (IGS) and Glu-490 each bind L-methionine. 5-methyltetrahydropteroyltri-L-glutamate contacts are provided by residues Asp-495, Tyr-518, 521 to 522 (RC), and Trp-567. An L-homocysteine-binding site is contributed by Asp-605. L-methionine is bound at residue Asp-605. His-647, Cys-649, His-658, Asp-662, and Glu-671 together coordinate Zn(2+). His-701 acts as the Proton donor in catalysis. Cys-733 serves as a coordination point for Zn(2+).

The protein belongs to the vitamin-B12 independent methionine synthase family. Zn(2+) serves as cofactor.

Its subcellular location is the cytoplasm. The enzyme catalyses 5-methyltetrahydropteroyltri-L-glutamate + L-homocysteine = tetrahydropteroyltri-L-glutamate + L-methionine. It participates in amino-acid biosynthesis; L-methionine biosynthesis via de novo pathway; L-methionine from L-homocysteine (MetE route): step 1/1. Catalyzes the transfer of a methyl group from 5-methyltetrahydrofolate to homocysteine resulting in methionine formation. This chain is 5-methyltetrahydropteroyltriglutamate--homocysteine methyltransferase (METE), found in Mesembryanthemum crystallinum (Common ice plant).